The sequence spans 914 residues: Valine--tRNA ligase (914 aa).

The 'HIGH' region signature appears at 47 to 57; that stretch reads PYPTGELHMGH. The 'KMSKS' region motif lies at 552–556; it reads KMSKS. An ATP-binding site is contributed by Lys-555.

It belongs to the class-I aminoacyl-tRNA synthetase family. ValS type 2 subfamily.

It localises to the cytoplasm. It carries out the reaction tRNA(Val) + L-valine + ATP = L-valyl-tRNA(Val) + AMP + diphosphate. Its function is as follows. Catalyzes the attachment of valine to tRNA(Val). As ValRS can inadvertently accommodate and process structurally similar amino acids such as threonine, to avoid such errors, it has a 'posttransfer' editing activity that hydrolyzes mischarged Thr-tRNA(Val) in a tRNA-dependent manner. The polypeptide is Valine--tRNA ligase (Methanopyrus kandleri (strain AV19 / DSM 6324 / JCM 9639 / NBRC 100938)).